The chain runs to 614 residues: Pyrophosphate--fructose 6-phosphate 1-phosphotransferase subunit alpha 1 (614 aa).

Belongs to the phosphofructokinase type A (PFKA) family. PPi-dependent PFK group II subfamily. Clade 'Long' sub-subfamily. As to quaternary structure, tetramer of two alpha (regulatory) and two beta (catalytic) chains. As to expression, expressed in leaves, roots, and flowers (e.g. sepals, petals, stamen and gynoecium).

The protein localises to the cytoplasm. Its pathway is carbohydrate degradation; glycolysis; D-glyceraldehyde 3-phosphate and glycerone phosphate from D-glucose: step 3/4. Its activity is regulated as follows. Allosterically activated by fructose 2,6-bisphosphate. In terms of biological role, regulatory subunit of pyrophosphate--fructose 6-phosphate 1-phosphotransferase. The sequence is that of Pyrophosphate--fructose 6-phosphate 1-phosphotransferase subunit alpha 1 from Arabidopsis thaliana (Mouse-ear cress).